The sequence spans 174 residues: 5-hydroxymethyl-dUMP N-hydrolase (174 aa).

Ala-2 bears the N-acetylalanine mark. Gly-27 contacts 5-hydroxymethyl-dUMP. Position 28 is a phosphoserine (Ser-28). Residues Ile-29, Arg-30, Gly-31, Ser-98, Gly-100, and Glu-104 each coordinate 5-hydroxymethyl-dUMP. Position 98 is a phosphoserine (Ser-98). Phosphoserine is present on residues Ser-123, Ser-128, Ser-138, and Ser-169. Ser-128 is a binding site for 5-hydroxymethyl-dUMP.

It belongs to the 2'-deoxynucleoside 5'-phosphate N-hydrolase 1 family. As to quaternary structure, monomer and homodimer. As to expression, expressed at low levels in brain, colon, lung, peripheral blood leukocytes, placenta, small intestine, and thymus. Expressed at high levels in heart, kidney, liver, skeletal muscle and spleen. Overexpressed in a significant proportion of breast cancers.

The protein localises to the cytoplasm. It is found in the nucleus. It carries out the reaction 5-hydroxymethyl-dUMP + H2O = 5-hydroxymethyluracil + 2-deoxy-D-ribose 5-phosphate. With respect to regulation, inhibited by AMP and GMP. In terms of biological role, part of a nucleotide salvage pathway that eliminates epigenetically modified 5-hydroxymethyl-dCMP (hmdCMP) in a two-step process entailing deamination to cytotoxic 5-hydroxymethyl-dUMP (hmdUMP), followed by its hydrolysis into 5-hydroxymethyluracil (hmU) and 2-deoxy-D-ribose 5-phosphate (deoxyribosephosphate). Catalyzes the second step in that pathway, the hydrolysis of the N-glycosidic bond in hmdUMP, degrading this cytotoxic nucleotide to avoid its genomic integration. The chain is 5-hydroxymethyl-dUMP N-hydrolase from Homo sapiens (Human).